An 86-amino-acid polypeptide reads, in one-letter code: Cell division topological specificity factor (86 aa).

Belongs to the MinE family.

Its function is as follows. Prevents the cell division inhibition by proteins MinC and MinD at internal division sites while permitting inhibition at polar sites. This ensures cell division at the proper site by restricting the formation of a division septum at the midpoint of the long axis of the cell. The polypeptide is Cell division topological specificity factor (Shewanella frigidimarina (strain NCIMB 400)).